The chain runs to 259 residues: 3-deoxy-manno-octulosonate cytidylyltransferase (259 aa).

Belongs to the KdsB family.

The protein localises to the cytoplasm. It carries out the reaction 3-deoxy-alpha-D-manno-oct-2-ulosonate + CTP = CMP-3-deoxy-beta-D-manno-octulosonate + diphosphate. It functions in the pathway nucleotide-sugar biosynthesis; CMP-3-deoxy-D-manno-octulosonate biosynthesis; CMP-3-deoxy-D-manno-octulosonate from 3-deoxy-D-manno-octulosonate and CTP: step 1/1. The protein operates within bacterial outer membrane biogenesis; lipopolysaccharide biosynthesis. In terms of biological role, activates KDO (a required 8-carbon sugar) for incorporation into bacterial lipopolysaccharide in Gram-negative bacteria. This is 3-deoxy-manno-octulosonate cytidylyltransferase from Maricaulis maris (strain MCS10) (Caulobacter maris).